A 108-amino-acid polypeptide reads, in one-letter code: Protein S100-A15A (108 aa).

Positions 53-88 (KEPYYVTELFQATDKNRDNQICFDEFLYILGKLVKD) constitute an EF-hand domain. 5 residues coordinate Ca(2+): D66, N68, D70, Q72, and E77.

This sequence belongs to the S-100 family.

In Gorilla gorilla gorilla (Western lowland gorilla), this protein is Protein S100-A15A (S100A15A).